A 302-amino-acid chain; its full sequence is Deoxyribonuclease-1-like 1 (302 aa).

The N-terminal stretch at 1–18 is a signal peptide; sequence MHYPTALLFLILVNGAQA. Active-site residues include E97 and H148. Cysteines 187 and 224 form a disulfide. N-linked (GlcNAc...) asparagine glycosylation is present at N261.

Belongs to the DNase I family.

The protein localises to the endoplasmic reticulum. The protein is Deoxyribonuclease-1-like 1 (DNASE1L1) of Chlorocebus aethiops (Green monkey).